Reading from the N-terminus, the 103-residue chain is Movement protein TGB2 (103 aa).

Residues 1–8 are Cytoplasmic-facing; that stretch reads MSFAPPPD. Residues 9-29 form a helical membrane-spanning segment; sequence YSKIYLALGCGLGLGFVVYAS. The Lumenal portion of the chain corresponds to 30 to 70; sequence RVNHLPHVGDNTHNLPHGGQYCDGNKRVLYSGPKSGSSPTN. Residues 71–91 traverse the membrane as a helical segment; the sequence is NLWPFITVIALTLAILLTSCP. Residues 92–103 are Cytoplasmic-facing; that stretch reads RRRVCIRCSQHH.

The protein belongs to the Tymovirales TGBp2 protein family.

The protein resides in the host endoplasmic reticulum membrane. Functionally, plays a role in viral cell-to-cell propagation, by facilitating genome transport to neighboring plant cells through plasmosdesmata,. The sequence is that of Movement protein TGB2 from Allium cepa var. aggregatum (Shallot).